A 236-amino-acid chain; its full sequence is Large ribosomal subunit protein uL1 (236 aa).

Belongs to the universal ribosomal protein uL1 family. Part of the 50S ribosomal subunit.

Binds directly to 23S rRNA. The L1 stalk is quite mobile in the ribosome, and is involved in E site tRNA release. Its function is as follows. Protein L1 is also a translational repressor protein, it controls the translation of the L11 operon by binding to its mRNA. In Kocuria rhizophila (strain ATCC 9341 / DSM 348 / NBRC 103217 / DC2201), this protein is Large ribosomal subunit protein uL1.